Consider the following 293-residue polypeptide: Ribonuclease HII (293 aa).

Residues 81–271 (THIAGVDEAG…VREALGLPTG (191 aa)) enclose the RNase H type-2 domain. Residues Asp-87, Glu-88, and Asp-180 each contribute to the a divalent metal cation site. Residues 273–293 (PPSALQAELFPEAPSRTGVKS) are disordered.

This sequence belongs to the RNase HII family. It depends on Mn(2+) as a cofactor. Requires Mg(2+) as cofactor.

The protein resides in the cytoplasm. The catalysed reaction is Endonucleolytic cleavage to 5'-phosphomonoester.. Its function is as follows. Endonuclease that specifically degrades the RNA of RNA-DNA hybrids. This is Ribonuclease HII from Myxococcus xanthus (strain DK1622).